We begin with the raw amino-acid sequence, 427 residues long: Trigger factor (427 aa).

One can recognise a PPIase FKBP-type domain in the interval 163–248 (GDTVVIDFVG…IHEVKAKEVP (86 aa)).

It belongs to the FKBP-type PPIase family. Tig subfamily.

It localises to the cytoplasm. It carries out the reaction [protein]-peptidylproline (omega=180) = [protein]-peptidylproline (omega=0). Functionally, involved in protein export. Acts as a chaperone by maintaining the newly synthesized protein in an open conformation. Functions as a peptidyl-prolyl cis-trans isomerase. This is Trigger factor from Streptococcus pneumoniae serotype 2 (strain D39 / NCTC 7466).